The following is a 197-amino-acid chain: Small ribosomal subunit protein uS4c (197 aa).

The 60-residue stretch at Met-84–Leu-143 folds into the S4 RNA-binding domain.

Belongs to the universal ribosomal protein uS4 family. As to quaternary structure, part of the 30S ribosomal subunit. Contacts protein S5. The interaction surface between S4 and S5 is involved in control of translational fidelity.

It is found in the plastid. The protein resides in the chloroplast. Functionally, one of the primary rRNA binding proteins, it binds directly to 16S rRNA where it nucleates assembly of the body of the 30S subunit. In terms of biological role, with S5 and S12 plays an important role in translational accuracy. The polypeptide is Small ribosomal subunit protein uS4c (rps4) (Adiantum capillus-veneris (Maidenhair fern)).